A 333-amino-acid chain; its full sequence is Fructose-1,6-bisphosphatase class 1 (333 aa).

Mg(2+) is bound by residues Glu-92, Asp-113, Leu-115, and Asp-116. Residues 116-119 (DGSS), Asn-209, Tyr-242, and Lys-272 each bind substrate. Glu-278 lines the Mg(2+) pocket.

It belongs to the FBPase class 1 family. As to quaternary structure, homotetramer. It depends on Mg(2+) as a cofactor.

The protein resides in the cytoplasm. It carries out the reaction beta-D-fructose 1,6-bisphosphate + H2O = beta-D-fructose 6-phosphate + phosphate. The protein operates within carbohydrate biosynthesis; Calvin cycle. This chain is Fructose-1,6-bisphosphatase class 1, found in Chlorobium chlorochromatii (strain CaD3).